Consider the following 262-residue polypeptide: uncharacterized protein (262 aa).

The N-terminal stretch at 1–22 is a signal peptide; sequence MGYLKRFALYISVMILIFAIAG. Cys23 carries N-palmitoyl cysteine lipidation. Cys23 carries S-diacylglycerol cysteine lipidation.

It belongs to the staphylococcal tandem lipoprotein family.

It is found in the cell membrane. This is an uncharacterized protein from Staphylococcus aureus (strain NCTC 8325 / PS 47).